Consider the following 405-residue polypeptide: MTNSEQNPPSEENVQVASTGEIESNYDEIVECFEALNLEGDLLRGIFAYGFEKPSAIQQRGIKPILDGYDTIGQAQSGTGKTATFVIAALQKIDYSLNACQVLLLAPTRELAQQIQKVALALGDYCELRCHACVGGTSVRDDMNKLKSGVHMVVGTPGRVFDMLDKGYLRVDNLKLFILDEADEMLSRGFKVQIHDIFKKLPQDVQVALFSATMPNEILHLTTQFMRDPKRILVKQEELTLEGIRQFYVGVEKDEWKMDTLIDLYETLTIVQAIIYCNTRRRVDQLTKQMRERDFTCSSMHGDMDQKDREVIMRQFRSGSSRVLITTDLLARGIDVQQVSLVINYDLPVSPETYIHRIGRSGRFGKKGVSINFVTDDDIVCLRDIERHYNTQIEEMPMGITDILQ.

Positions 31-59 (ECFEALNLEGDLLRGIFAYGFEKPSAIQQ) match the Q motif motif. The 171-residue stretch at 62–232 (IKPILDGYDT…TQFMRDPKRI (171 aa)) folds into the Helicase ATP-binding domain. 75–82 (AQSGTGKT) contacts ATP. The short motif at 180-183 (DEAD) is the DEAD box element. The region spanning 243–404 (GIRQFYVGVE…EMPMGITDIL (162 aa)) is the Helicase C-terminal domain.

This sequence belongs to the DEAD box helicase family. eIF4A subfamily. In terms of assembly, eIF4F is a multi-subunit complex, the composition of which varies with external and internal environmental conditions. It is composed of at least EIF4A, EIF4E and EIF4G.

It carries out the reaction ATP + H2O = ADP + phosphate + H(+). ATP-dependent RNA helicase which is a subunit of the eIF4F complex involved in cap recognition and is required for mRNA binding to ribosome. In the current model of translation initiation, eIF4A unwinds RNA secondary structures in the 5'-UTR of mRNAs which is necessary to allow efficient binding of the small ribosomal subunit, and subsequent scanning for the initiator codon. This is Eukaryotic initiation factor 4A (EIF4-A) from Cryptosporidium parvum.